The sequence spans 528 residues: Acid-sensing ion channel 1 (528 aa).

The Cytoplasmic segment spans residues 1-49 (MELKAEEEEVGGVQPVSIQAFASSSTLHGLAHIFSYERLSLKRALWALC). A helical transmembrane segment spans residues 50–66 (FLGSLAVLLCVCTERVQ). Residues 67–427 (YYFHYHHVTK…ETIEQKKAYE (361 aa)) are Extracellular-facing. Intrachain disulfides connect cysteine 93–cysteine 194, cysteine 172–cysteine 179, cysteine 290–cysteine 367, cysteine 310–cysteine 363, cysteine 314–cysteine 361, cysteine 323–cysteine 345, and cysteine 325–cysteine 337. N-linked (GlcNAc...) asparagine glycosylation is found at asparagine 368 and asparagine 395. The discontinuously helical transmembrane segment at 428-458 (IAGLLGDIGGQMGLFIGASILTVLELFDYAY) threads the bilayer. The short motif at 444-446 (GAS) is the GAS motif; ion selectivity filter element. Residues 459-528 (EVIKHKLCRR…ARGTFEDFTC (70 aa)) lie on the Cytoplasmic side of the membrane. Serine 479 carries the post-translational modification Phosphoserine; by PKA. Position 499 is a phosphoserine (serine 499).

The protein belongs to the amiloride-sensitive sodium channel (TC 1.A.6) family. ASIC1 subfamily. Forms functional homotrimeric channels. Forms heterotrimers with other ASIC proteins, resulting in channels with distinct properties. Interacts with PICK1; regulates ASIC1 clustering in membranes. Interacts with STOM; alters heterotrimeric channels activity. Post-translationally, pH-gating could be regulated by serine proteases. Phosphorylation by PKA regulates interaction with PICK1 and subcellular localization. Phosphorylation by PKC may regulate the channel. As to expression, expressed in neurons throughout the central and peripheral nervous system.

Its subcellular location is the cell membrane. The protein localises to the postsynaptic cell membrane. The protein resides in the cell projection. It is found in the dendrite. The enzyme catalyses Na(+)(in) = Na(+)(out). It carries out the reaction K(+)(in) = K(+)(out). The catalysed reaction is Li(+)(in) = Li(+)(out). It catalyses the reaction Ca(2+)(in) = Ca(2+)(out). Potentiated by FMRFamide-related neuropeptides, which are induced during inflammation and modulate pain responses. Inhibited by the diuretic drug amiloride. Spider venom psalmotoxin-1 inhibits the channel by locking it in its desensitized conformation. The homotrimeric channel is inhibited by the spider venom pi-theraphotoxin-Hm3a. Homotrimeric and heterotrimeric (with ASIC2 isoform 1) channels are inhibited by the snake venom mambalgin-1, which prevents proton-induced transitions from the resting closed state to the active and/or desensitized states. Inhibited by Texas coral snake toxin MitTx1. Functionally, forms voltage-independent, pH-gated trimeric sodium channels that act as postsynaptic excitatory receptors in the nervous system, playing a crucial role in regulating synaptic plasticity, learning, and memory. Upon extracellular pH drop this channel elicits transient, fast activating, and completely desensitizing inward currents. Displays high selectivity for sodium ions but can also permit the permeation of other cations. Regulates more or less directly intracellular calcium concentration and CaMKII phosphorylation, and thereby the density of dendritic spines. Modulates neuronal activity in the circuits underlying innate fear. Has high selectivity for sodium ions, but can also be permeable to other cations including calcium, lithium and potassium. Its function is as follows. Produces acid activated currents with a reduced amplitude and inactivates faster. Has high selectivity for sodium ions but also supports a calcium-mediated current which is sustained and maintained as long as acidic conditions are present. Also potentially permeable to lithium and potassium. In terms of biological role, has no measurable proton-gated sodium channel activity in vitro. In Homo sapiens (Human), this protein is Acid-sensing ion channel 1.